The sequence spans 759 residues: Catalase-peroxidase (759 aa).

The tract at residues Met-1–Asn-24 is disordered. A cross-link (tryptophyl-tyrosyl-methioninium (Trp-Tyr) (with M-268)) is located at residues Trp-96 to Tyr-242. The Proton acceptor role is filled by His-97. Residues Tyr-242–Met-268 constitute a cross-link (tryptophyl-tyrosyl-methioninium (Tyr-Met) (with W-96)). Heme b is bound at residue His-283.

This sequence belongs to the peroxidase family. Peroxidase/catalase subfamily. In terms of assembly, homodimer or homotetramer. It depends on heme b as a cofactor. Post-translationally, formation of the three residue Trp-Tyr-Met cross-link is important for the catalase, but not the peroxidase activity of the enzyme.

Its subcellular location is the cytoplasm. The catalysed reaction is H2O2 + AH2 = A + 2 H2O. It catalyses the reaction 2 H2O2 = O2 + 2 H2O. In terms of biological role, bifunctional enzyme with both catalase and broad-spectrum peroxidase activity. In Aspergillus fumigatus (strain CBS 144.89 / FGSC A1163 / CEA10) (Neosartorya fumigata), this protein is Catalase-peroxidase.